The chain runs to 643 residues: Fructose-1,6-bisphosphatase class 3 (643 aa).

It belongs to the FBPase class 3 family. Mn(2+) is required as a cofactor.

It catalyses the reaction beta-D-fructose 1,6-bisphosphate + H2O = beta-D-fructose 6-phosphate + phosphate. Its pathway is carbohydrate biosynthesis; gluconeogenesis. This Lacticaseibacillus paracasei (strain ATCC 334 / BCRC 17002 / CCUG 31169 / CIP 107868 / KCTC 3260 / NRRL B-441) (Lactobacillus paracasei) protein is Fructose-1,6-bisphosphatase class 3.